A 322-amino-acid chain; its full sequence is MQITFLGTSSGVPTRARNVSSVALRLPQRAELWLFDCGEGTQHQILRSDLKVSQLSRIFITHLHGDHIFGLMGLLASCGLAGNVQRVDIYGPSGLNDYIQSASRYSHTHFSYPIKVHTVRPGVIYENDEFTVTCGLLHHRITAFGYRVAEKDRAGRFDIEKAKELQIPPGRIYGQLKRGETVTLEDGRVINGAELCGPTEIGRKMAYCTDTIYCDGAVELAQDADVLIHEATFAHQDSEMAFQRLHSTTTMAAQTALAAGVRRLLMTHFSPRYAPGNTIELKDLLQEARAIFPRTDMAYDFMTYEVPRRREPVFSSVSSSSV.

The Zn(2+) site is built by His62, His64, Asp66, His67, His139, Asp210, and His268. Catalysis depends on Asp66, which acts as the Proton acceptor.

The protein belongs to the RNase Z family. Homodimer. It depends on Zn(2+) as a cofactor.

It carries out the reaction Endonucleolytic cleavage of RNA, removing extra 3' nucleotides from tRNA precursor, generating 3' termini of tRNAs. A 3'-hydroxy group is left at the tRNA terminus and a 5'-phosphoryl group is left at the trailer molecule.. Zinc phosphodiesterase, which displays some tRNA 3'-processing endonuclease activity. Probably involved in tRNA maturation, by removing a 3'-trailer from precursor tRNA. The sequence is that of Ribonuclease Z from Nostoc sp. (strain PCC 7120 / SAG 25.82 / UTEX 2576).